The primary structure comprises 842 residues: MTFPLLPAYASVAEFDNSLSLVGKAVFPYAADQLHNLIKFTQSTELQVNVQVESSVTEDQFEELIDNLLKLYNNGINEVILDLDLAERVVQRIPGARVIYRTLVDKVASLPANASIAVPFSSPLGDLKSFTNGGSRTVYAFSETAKLVDVTSTVASGIIPIIDARQLTTEYELSEDVKKFPVSEILLASLTTDRPDGLFTTLVADSSNYSLGLVYSSKKSIPEAIRTQTGVYQSRRHGLWYKGATSGATQKLLGIELDCDGDCLKFVVEQTGVGFCHLERTSCFGQSKGLRAMEATLWDRKSNAPEGSYTKRLFDDEVLLNAKIREEADELAEAKSKEDIAWECADLFYFALVRCAKYGVTLDEVERNLDMKSLKVTRRKGDAKPGYTKEQPKEESKPKEVPSEGRIELCKIDVSKASSQEIEDALRRPIQKTEQIMELVKPIVDNVRQNGDKALLELTAKFDGVALKTPVLEAPFPEELMQLPDNVKRAIDLSIDNVRKFHEAQLAETLQVETCPGVVCSRFARPIEKVGLYIPGGTAILPSTSLMLGVPAKVAGCKEIVFASPPKKDGTLTPEVIYVAHKVGAKCIVLAGGAQAVAAMAYGTETVPKCDKIFGPGNQFVTAAKMMVQNDTSALCSIDMPAGPSEVLVIADKYADPDFVVSDLLSQAEHGIDSQVILLAVDMTDKELARIEDAVHNQAVQLPRVEIVRKCIAHSTTLSVATYEQALEMSNQYAPEHLILQIENASYVDQVQHAGSVFVGAYSPESCGDYSSGTNHTLPTYGYARQYSGVNTATFQKFITSQDVTPEGLKHIGQAVMDLAAVEGLDAHRNAVKVRMEKLGLI.

The interval 1–275 (MTFPLLPAYA…FVVEQTGVGF (275 aa)) is phosphoribosyl-AMP cyclohydrolase. The phosphoribosyl-ATP pyrophosphohydrolase stretch occupies residues 276 to 357 (CHLERTSCFG…FYFALVRCAK (82 aa)). Residues 358–842 (YGVTLDEVER…KVRMEKLGLI (485 aa)) form a histidinol dehydrogenase region. Residues 380–403 (KGDAKPGYTKEQPKEESKPKEVPS) are disordered. Positions 390 to 403 (EQPKEESKPKEVPS) are enriched in basic and acidic residues. Zn(2+) is bound by residues Gln667 and His670. Residues Glu736 and His737 contribute to the active site. Zn(2+) contacts are provided by Asp769 and His828.

This sequence in the C-terminal section; belongs to the histidinol dehydrogenase family. Zn(2+) is required as a cofactor.

The enzyme catalyses 1-(5-phospho-beta-D-ribosyl)-5'-AMP + H2O = 1-(5-phospho-beta-D-ribosyl)-5-[(5-phospho-beta-D-ribosylamino)methylideneamino]imidazole-4-carboxamide. It catalyses the reaction 1-(5-phospho-beta-D-ribosyl)-ATP + H2O = 1-(5-phospho-beta-D-ribosyl)-5'-AMP + diphosphate + H(+). It carries out the reaction L-histidinol + 2 NAD(+) + H2O = L-histidine + 2 NADH + 3 H(+). It participates in amino-acid biosynthesis; L-histidine biosynthesis; L-histidine from 5-phospho-alpha-D-ribose 1-diphosphate: step 2/9. The protein operates within amino-acid biosynthesis; L-histidine biosynthesis; L-histidine from 5-phospho-alpha-D-ribose 1-diphosphate: step 3/9. It functions in the pathway amino-acid biosynthesis; L-histidine biosynthesis; L-histidine from 5-phospho-alpha-D-ribose 1-diphosphate: step 9/9. The polypeptide is Histidine biosynthesis trifunctional protein (HIS4) (Komagataella pastoris (Yeast)).